The chain runs to 87 residues: Lantipeptide prochlorosin 3.3 (87 aa).

The propeptide occupies 1-64; it reads MSEEQLKAFI…DEELEAASGG (64 aa). Thr67 is subject to 2,3-didehydrobutyrine. A cross-link (beta-methyllanthionine (Thr-Cys)) is located at residues 75–85; it reads TAGCYGGTKMC. A cross-link (beta-methyllanthionine (Cys-Thr)) is located at residues 78–82; sequence CYGGT.

Cross-links are proved in vitro, when coepressed in E.coli with the ProcM lanthionine synthetase. In terms of processing, the beta-methyllanthionine residues have a DL configuration (with 2S,3S,6R stereochemistry). Post-translationally, maturation of prochlorosin involves the enzymatic conversion of Thr, and Ser into dehydrated AA and the formation of thioether bonds with cysteines. This is followed by membrane translocation and cleavage of the modified precursor.

It localises to the secreted. Functionally, lanthionine-containing peptide (lantipeptide) with unknown function. Does not show antibiotic activity against Lactococcus lactis 117 and Bacillus subtilis 6633 bacteria. Organisms that produce this peptide live in oligotrophic environments at very dilute concentrations, suggesting this peptide is not secreted to influence other bacteria. This chain is Lantipeptide prochlorosin 3.3, found in Prochlorococcus marinus (strain MIT 9313).